Reading from the N-terminus, the 258-residue chain is Regulatory protein RecX (258 aa).

The protein belongs to the RecX family.

Its subcellular location is the cytoplasm. Functionally, modulates RecA activity. The protein is Regulatory protein RecX of Streptococcus mutans serotype c (strain ATCC 700610 / UA159).